Here is a 315-residue protein sequence, read N- to C-terminus: Protoheme IX farnesyltransferase 1 (315 aa).

The next 9 membrane-spanning stretches (helical) occupy residues 25 to 45 (PGII…AAKG), 49 to 69 (LALM…GCAV), 87 to 107 (RVTV…LALG), 120 to 139 (ALAL…VYSL), 145 to 165 (SVYG…VGYC), 176 to 196 (AILL…IAIF), 220 to 240 (LHIV…PLAG), 242 to 262 (TGIA…AMAL), and 280 to 300 (GFSI…SQVI).

Belongs to the UbiA prenyltransferase family. Protoheme IX farnesyltransferase subfamily.

The protein resides in the cell inner membrane. The enzyme catalyses heme b + (2E,6E)-farnesyl diphosphate + H2O = Fe(II)-heme o + diphosphate. The protein operates within porphyrin-containing compound metabolism; heme O biosynthesis; heme O from protoheme: step 1/1. Its function is as follows. Converts heme B (protoheme IX) to heme O by substitution of the vinyl group on carbon 2 of heme B porphyrin ring with a hydroxyethyl farnesyl side group. The polypeptide is Protoheme IX farnesyltransferase 1 (Shewanella sp. (strain W3-18-1)).